The primary structure comprises 213 residues: uncharacterized protein (213 aa).

This is an uncharacterized protein from Saccharomyces cerevisiae (strain ATCC 204508 / S288c) (Baker's yeast).